The sequence spans 631 residues: Transcription factor dibT (631 aa).

A DNA-binding region (zn(2)-C6 fungal-type) is located at residues 11-38 (CWTCRLRRKRCDSVQPVCGSCQSLEITC). The segment covering 123-144 (SLADSSASTPSTSSGRPTTLRS) has biased composition (low complexity). Disordered regions lie at residues 123 to 148 (SLADSSASTPSTSSGRPTTLRSSVDR) and 469 to 488 (GLKDLDTSPPSPQPTKTSAG).

The protein localises to the nucleus. Transcription factor; part of the gene cluster that mediates the biosynthesis of pestalotiollide B which is part of dibenzodioxocinones, a novel class of inhibitors against cholesterol ester transfer protein (CEPT). Acts as the key transcription factor within the cluster and positively regulates the expression of the cluster genes and the subsequent production of dibenzodioxocinones such as pestalotiollide B, pestalotiollide C, 1',2'-dehydropenicillide, 3'-methoxy-1',2'-dehydropenicillide and 1',2'-epoxy-3',4'-didehydropenicillide. Required for the expression of most PKS genes outside of the dibenzodioxocinones cluster, (43 out of 48 defined PKS genes), and promotes pigmentation of the mycelium and conidia. This Pestalotiopsis microspora protein is Transcription factor dibT.